Consider the following 239-residue polypeptide: Purine nucleoside phosphorylase DeoD-type (239 aa).

His5 serves as a coordination point for a purine D-ribonucleoside. Residues Gly21, Arg25, Arg44, and 88–91 (RVGS) each bind phosphate. Residues 180 to 182 (EME) and 204 to 205 (SD) contribute to the a purine D-ribonucleoside site. The Proton donor role is filled by Asp205.

It belongs to the PNP/UDP phosphorylase family. Homohexamer; trimer of homodimers.

It carries out the reaction a purine D-ribonucleoside + phosphate = a purine nucleobase + alpha-D-ribose 1-phosphate. The catalysed reaction is a purine 2'-deoxy-D-ribonucleoside + phosphate = a purine nucleobase + 2-deoxy-alpha-D-ribose 1-phosphate. Catalyzes the reversible phosphorolytic breakdown of the N-glycosidic bond in the beta-(deoxy)ribonucleoside molecules, with the formation of the corresponding free purine bases and pentose-1-phosphate. The chain is Purine nucleoside phosphorylase DeoD-type from Yersinia pseudotuberculosis serotype O:1b (strain IP 31758).